Consider the following 134-residue polypeptide: Small ribosomal subunit protein uS8c (134 aa).

Belongs to the universal ribosomal protein uS8 family. In terms of assembly, part of the 30S ribosomal subunit.

Its subcellular location is the plastid. The protein localises to the chloroplast. Its function is as follows. One of the primary rRNA binding proteins, it binds directly to 16S rRNA central domain where it helps coordinate assembly of the platform of the 30S subunit. The polypeptide is Small ribosomal subunit protein uS8c (rps8) (Draba nemorosa (Woodland whitlowgrass)).